We begin with the raw amino-acid sequence, 645 residues long: Cell pattern formation-associated protein stuA (645 aa).

Residues 1-52 form a disordered region; that stretch reads MNQMQPYADVHQPHMSTAAHAPASGPPAGLSHYSYPHQPSMMQPQQQQHQYG. Low complexity predominate over residues 18 to 52; the sequence is AAHAPASGPPAGLSHYSYPHQPSMMQPQQQQHQYG. One can recognise an HTH APSES-type domain in the interval 124–230; that stretch reads RVTATLWEDE…HDIGALLYHP (107 aa). Positions 158–179 form a DNA-binding region, H-T-H motif; that stretch reads GTKLLNVAGMTRGRRDGILKSE. A disordered region spans residues 246–645; sequence VDRNRRPDSM…HTLAAQRARR (400 aa). Composition is skewed to polar residues over residues 254 to 271 and 279 to 288; these read SMQT…SQAP and MTNSVGSAMS. The span at 317-330 shows a compositional bias: low complexity; the sequence is SASSMMGMGNQGSS. Residues 336–365 are compositionally biased toward polar residues; the sequence is ANVQQHPQGNQPLSIDTGLSNARSVPTTPA. Residues 469-481 show a composition bias toward low complexity; that stretch reads PYNGNRGPYGYNP. Polar residues-rich tracts occupy residues 502-542 and 569-584; these read SPHQ…NLYN and YASQ…NSSG. Residues 585–613 are nuclear localization domain; the sequence is KRGRDEEDAETYRPDSVQGDDMGGLKRRK. Residues 586-597 show a composition bias toward basic and acidic residues; sequence RGRDEEDAETYR.

This sequence belongs to the EFG1/PHD1/stuA family.

The protein localises to the nucleus. Its function is as follows. Transcription factor that regulates asexual reproduction. Binds the StuA-response elements (StRE) with the consensus sequence 5'-(A/T)CGCG(T/A)N(A/C)-3' at the promoters of target genes. Regulates the expression of several effector genes (AvrLm1, AvrLm6 and AvrLm4-7) during infection stage. This is Cell pattern formation-associated protein stuA from Leptosphaeria maculans (strain JN3 / isolate v23.1.3 / race Av1-4-5-6-7-8) (Blackleg fungus).